The chain runs to 152 residues: Acidic phospholipase A2 homolog taipoxin gamma chain (152 aa).

The N-terminal stretch at 1-19 is a signal peptide; the sequence is MHPAHLLVLLAVCVSLLGS. Cystine bridges form between cysteine 38–cysteine 104, cysteine 42–cysteine 46, cysteine 54–cysteine 151, cysteine 56–cysteine 72, cysteine 71–cysteine 132, cysteine 78–cysteine 125, cysteine 88–cysteine 118, and cysteine 111–cysteine 123. N-linked (GlcNAc...) asparagine glycosylation is present at asparagine 97.

This sequence belongs to the phospholipase A2 family. Group I subfamily. D49 sub-subfamily. In terms of assembly, heterotrimer of alpha, beta, and gamma chains; non-covalently linked. Post-translationally, contains 0.9% fucose, 2.2% mannose, 4.2% N-acetyl-D-glucosamine, 3.5% galactose, and 3.8% N-acetyl-neuraminic acid (sialic acid). As to expression, expressed by the venom gland.

Its subcellular location is the secreted. Heterotrimer: Snake venom phospholipase A2 (PLA2) heterotrimer that acts as a potent presynaptic neurotoxin by blocking synaptic transmission and synaptic vesicle recycling. May act by binding in a calcium-dependent fashion to neurotonal pentraxin-1 (NPTX1) and neurotonal pentraxin-2 (NPTX2), but not to neuronal pentraxin receptor (NPTXR). Also binds to taipoxin-associated calcium binding protein 49 (RCN2), a protein localized in the lumen of endoplasmic reticulum. In terms of biological role, monomer (gamma chain): Snake venom phospholipase A2 homolog that is neither toxic nor enzymatically active. Does not bind calcium. This is Acidic phospholipase A2 homolog taipoxin gamma chain from Oxyuranus scutellatus scutellatus (Australian taipan).